The following is a 268-amino-acid chain: Nuclear protein UL4 homolog (268 aa).

This sequence belongs to the alphaherpesvirinae HHV-1 UL4 family.

Its subcellular location is the host nucleus. The protein is Nuclear protein UL4 homolog (MDV016) of Gallid herpesvirus 2 (strain Chicken/Md5/ATCC VR-987) (GaHV-2).